Consider the following 422-residue polypeptide: Phospho-N-acetylmuramoyl-pentapeptide-transferase (422 aa).

9 helical membrane-spanning segments follow: residues 28–48, 71–91, 95–115, 136–156, 211–231, 239–259, 279–299, 313–333, and 399–419; these read LMAV…FINL, VGVP…PCLL, LDNI…SLGF, IIGQ…SPDV, AGWF…SNGA, GMAA…AYVS, LVIY…YNAY, IGGI…IPIL, and KITV…IITL.

It belongs to the glycosyltransferase 4 family. MraY subfamily. It depends on Mg(2+) as a cofactor.

It localises to the cell inner membrane. The catalysed reaction is UDP-N-acetyl-alpha-D-muramoyl-L-alanyl-gamma-D-glutamyl-meso-2,6-diaminopimeloyl-D-alanyl-D-alanine + di-trans,octa-cis-undecaprenyl phosphate = di-trans,octa-cis-undecaprenyl diphospho-N-acetyl-alpha-D-muramoyl-L-alanyl-D-glutamyl-meso-2,6-diaminopimeloyl-D-alanyl-D-alanine + UMP. It functions in the pathway cell wall biogenesis; peptidoglycan biosynthesis. Functionally, catalyzes the initial step of the lipid cycle reactions in the biosynthesis of the cell wall peptidoglycan: transfers peptidoglycan precursor phospho-MurNAc-pentapeptide from UDP-MurNAc-pentapeptide onto the lipid carrier undecaprenyl phosphate, yielding undecaprenyl-pyrophosphoryl-MurNAc-pentapeptide, known as lipid I. The protein is Phospho-N-acetylmuramoyl-pentapeptide-transferase of Bacteroides thetaiotaomicron (strain ATCC 29148 / DSM 2079 / JCM 5827 / CCUG 10774 / NCTC 10582 / VPI-5482 / E50).